The following is a 366-amino-acid chain: S-adenosylmethionine synthase 1 (366 aa).

Residue E18 participates in K(+) binding. Positions 31 and 74 each coordinate L-methionine. Residues 142–144 (DGN), 210–213 (SGRF), D221, 227–228 (RK), A244, K248, and K252 each bind ATP. D221 lines the L-methionine pocket. An L-methionine-binding site is contributed by K252.

The protein belongs to the AdoMet synthase family. Homotetramer. Mn(2+) serves as cofactor. Requires Mg(2+) as cofactor. It depends on Co(2+) as a cofactor. K(+) is required as a cofactor.

The protein localises to the cytoplasm. It carries out the reaction L-methionine + ATP + H2O = S-adenosyl-L-methionine + phosphate + diphosphate. The protein operates within amino-acid biosynthesis; S-adenosyl-L-methionine biosynthesis; S-adenosyl-L-methionine from L-methionine: step 1/1. Its function is as follows. Catalyzes the formation of S-adenosylmethionine from methionine and ATP. The reaction comprises two steps that are both catalyzed by the same enzyme: formation of S-adenosylmethionine (AdoMet) and triphosphate, and subsequent hydrolysis of the triphosphate. This Pisum sativum (Garden pea) protein is S-adenosylmethionine synthase 1 (SAMS1).